A 374-amino-acid chain; its full sequence is Flap endonuclease 1 (374 aa).

The interval 1–105 (MGIKGLTALI…ELLQKRFGRR (105 aa)) is N-domain. Asp-34 lines the Mg(2+) pocket. Positions 47 and 71 each coordinate DNA. Asp-87 contributes to the Mg(2+) binding site. The tract at residues 103–122 (GRREEAREQEEEQKDVADAE) is disordered. Positions 123-254 (KMDQLARRQV…KTALKLIREH (132 aa)) are I-domain. The Mg(2+) site is built by Glu-159, Glu-161, Asp-180, and Asp-182. Glu-159 provides a ligand contact to DNA. DNA-binding residues include Gly-232 and Asp-234. Asp-234 contacts Mg(2+). Residues 335–374 (SLSQKQQGRLDGFFTVKPGSAPPKRKAEDDKKNVKKKGKK) form a disordered region. An interaction with PCNA region spans residues 340–348 (QQGRLDGFF).

Belongs to the XPG/RAD2 endonuclease family. FEN1 subfamily. As to quaternary structure, interacts with PCNA. Three molecules of FEN1 bind to one PCNA trimer with each molecule binding to one PCNA monomer. PCNA stimulates the nuclease activity without altering cleavage specificity. Mg(2+) is required as a cofactor. Post-translationally, phosphorylated. Phosphorylation upon DNA damage induces relocalization to the nuclear plasma.

The protein localises to the nucleus. Its subcellular location is the nucleolus. It is found in the nucleoplasm. It localises to the mitochondrion. Its function is as follows. Structure-specific nuclease with 5'-flap endonuclease and 5'-3' exonuclease activities involved in DNA replication and repair. During DNA replication, cleaves the 5'-overhanging flap structure that is generated by displacement synthesis when DNA polymerase encounters the 5'-end of a downstream Okazaki fragment. It enters the flap from the 5'-end and then tracks to cleave the flap base, leaving a nick for ligation. Also involved in the long patch base excision repair (LP-BER) pathway, by cleaving within the apurinic/apyrimidinic (AP) site-terminated flap. Acts as a genome stabilization factor that prevents flaps from equilibrating into structures that lead to duplications and deletions. Also possesses 5'-3' exonuclease activity on nicked or gapped double-stranded DNA, and exhibits RNase H activity. Also involved in replication and repair of rDNA and in repairing mitochondrial DNA. This chain is Flap endonuclease 1, found in Mycosarcoma maydis (Corn smut fungus).